Reading from the N-terminus, the 172-residue chain is RNA pyrophosphohydrolase (172 aa).

One can recognise a Nudix hydrolase domain in the interval 6–149; the sequence is GFRANVGIII…KRDVYRKVMK (144 aa). Positions 38–59 match the Nudix box motif; that stretch reads GGLDDGESAEEAMYRELYEEVG.

The protein belongs to the Nudix hydrolase family. RppH subfamily. The cofactor is a divalent metal cation.

Accelerates the degradation of transcripts by removing pyrophosphate from the 5'-end of triphosphorylated RNA, leading to a more labile monophosphorylated state that can stimulate subsequent ribonuclease cleavage. In Shewanella denitrificans (strain OS217 / ATCC BAA-1090 / DSM 15013), this protein is RNA pyrophosphohydrolase.